The sequence spans 575 residues: Mitochondrial 2-methylisocitrate lyase ICL2 (575 aa).

Cys-238 is a catalytic residue.

The protein belongs to the isocitrate lyase/PEP mutase superfamily. Isocitrate lyase family.

It is found in the mitochondrion matrix. It catalyses the reaction (2S,3R)-3-hydroxybutane-1,2,3-tricarboxylate = pyruvate + succinate. Its pathway is organic acid metabolism; propanoate degradation. In terms of biological role, catalyzes the formation of pyruvate and succinate from 2-methylisocitrate during the metabolism of endogenous propionyl-CoA. Does not act on isocitrate. This chain is Mitochondrial 2-methylisocitrate lyase ICL2 (ICL2), found in Saccharomyces cerevisiae (strain ATCC 204508 / S288c) (Baker's yeast).